Here is a 242-residue protein sequence, read N- to C-terminus: Guanylate kinase (242 aa).

Positions 22 to 200 (GLLIVMTGAS…AVRELQAVQR (179 aa)) constitute a Guanylate kinase-like domain. 29-36 (GASGVGKG) is an ATP binding site.

It belongs to the guanylate kinase family.

It localises to the cytoplasm. It catalyses the reaction GMP + ATP = GDP + ADP. Functionally, essential for recycling GMP and indirectly, cGMP. In Deinococcus geothermalis (strain DSM 11300 / CIP 105573 / AG-3a), this protein is Guanylate kinase.